Consider the following 1503-residue polypeptide: EF-hand calcium-binding domain-containing protein 5 (1503 aa).

Residues 1–23 form a disordered region; the sequence is MNESASQEELRPAQENRKEDKER. Positions 8 to 23 are enriched in basic and acidic residues; the sequence is EELRPAQENRKEDKER. Residue serine 77 is modified to Phosphoserine. 3 disordered regions span residues 477–518, 544–656, and 730–750; these read ASKT…EQGP, IEPG…QGPY, and FPETTKKEVQKDKPCEPKSQK. Residues 549 to 561 show a composition bias toward polar residues; the sequence is HTESTLEQGSSRR. 2 stretches are compositionally biased toward basic and acidic residues: residues 562 to 582 and 607 to 622; these read LLTEQETHRESTTEQGQHKGS and GSRRESIAEQDRHKGS. The EF-hand domain occupies 869 to 904; it reads RQRLLLEAIFQKWDSDGSGFLDLKEVDELLYTYKEG. 4 residues coordinate Ca(2+): aspartate 882, aspartate 884, serine 886, and glutamate 893.

The chain is EF-hand calcium-binding domain-containing protein 5 (EFCAB5) from Homo sapiens (Human).